A 184-amino-acid polypeptide reads, in one-letter code: Shikimate kinase (184 aa).

12–17 (GSGKST) is a binding site for ATP. Ser-16 lines the Mg(2+) pocket. Residues Asp-34, Arg-58, and Gly-80 each coordinate substrate. ATP is bound at residue Arg-117. Substrate is bound at residue Arg-136. Residue Arg-153 coordinates ATP. The segment at 164–184 (SRLDDPTPNTSPSSTASGAAT) is disordered. Residues 169 to 184 (PTPNTSPSSTASGAAT) are compositionally biased toward low complexity.

Belongs to the shikimate kinase family. Monomer. Requires Mg(2+) as cofactor.

It is found in the cytoplasm. The enzyme catalyses shikimate + ATP = 3-phosphoshikimate + ADP + H(+). Its pathway is metabolic intermediate biosynthesis; chorismate biosynthesis; chorismate from D-erythrose 4-phosphate and phosphoenolpyruvate: step 5/7. Its function is as follows. Catalyzes the specific phosphorylation of the 3-hydroxyl group of shikimic acid using ATP as a cosubstrate. The polypeptide is Shikimate kinase (Mycobacterium ulcerans (strain Agy99)).